The primary structure comprises 706 residues: Protein psiG (706 aa).

An N-terminal signal peptide occupies residues M1–S23. The Extracellular portion of the chain corresponds to E24–S644. N-linked (GlcNAc...) asparagine glycans are attached at residues N95, N107, N212, N296, N429, N521, N532, and N616. One can recognise a PA14 domain in the interval T109–D253. A helical membrane pass occupies residues T645–A665. Topologically, residues S666–S706 are cytoplasmic. The tract at residues N687–S706 is disordered. The span at P693–S706 shows a compositional bias: polar residues.

This sequence belongs to the prespore-cell-inducing factor family.

The protein localises to the membrane. This is Protein psiG (psiG-1) from Dictyostelium discoideum (Social amoeba).